A 322-amino-acid chain; its full sequence is 4-hydroxythreonine-4-phosphate dehydrogenase (322 aa).

Substrate is bound by residues histidine 131 and threonine 132. A divalent metal cation contacts are provided by histidine 161, histidine 206, and histidine 259. Substrate-binding residues include lysine 267, asparagine 276, and arginine 285.

This sequence belongs to the PdxA family. In terms of assembly, homodimer. A divalent metal cation is required as a cofactor.

Its subcellular location is the cytoplasm. The catalysed reaction is 4-(phosphooxy)-L-threonine + NAD(+) = 3-amino-2-oxopropyl phosphate + CO2 + NADH. The protein operates within cofactor biosynthesis; pyridoxine 5'-phosphate biosynthesis; pyridoxine 5'-phosphate from D-erythrose 4-phosphate: step 4/5. Its function is as follows. Catalyzes the NAD(P)-dependent oxidation of 4-(phosphooxy)-L-threonine (HTP) into 2-amino-3-oxo-4-(phosphooxy)butyric acid which spontaneously decarboxylates to form 3-amino-2-oxopropyl phosphate (AHAP). This chain is 4-hydroxythreonine-4-phosphate dehydrogenase, found in Sulfurihydrogenibium sp. (strain YO3AOP1).